Consider the following 1079-residue polypeptide: Electrogenic sodium bicarbonate cotransporter 1 (1079 aa).

Residues 1-62 (MEDEAVLDRG…EKKEKERISE (62 aa)) form a required for interaction with AHCYL1 region. At 1 to 466 (MEDEAVLDRG…FASDFYDALN (466 aa)) the chain is on the cytoplasmic side. Glutamate 21 bears the Phosphoserine mark. At tyrosine 30 the chain carries Phosphotyrosine. The segment covering 39 to 52 (YRRRRRHKRKAGHK) has biased composition (basic residues). The segment at 39–78 (YRRRRRHKRKAGHKEKKEKERISENYSDKSDVENADESSS) is disordered. A compositionally biased stretch (basic and acidic residues) spans 53 to 70 (EKKEKERISENYSDKSDV). Serine 61, serine 65, serine 68, serine 223, serine 232, serine 233, and serine 245 each carry phosphoserine. A disordered region spans residues 235 to 266 (SRMFSNPDNGSPAMTHRNLTSSSLNDISDKPE). Residues threonine 249 and threonine 254 each carry the phosphothreonine modification. Over residues 251-260 (RNLTSSSLND) the composition is skewed to polar residues. Residues serine 256, serine 257, and serine 262 each carry the phosphoserine modification. The helical transmembrane segment at 467–491 (IQALSAILFIYLATVTNAITFGGLL) threads the bilayer. Residues 492 to 501 (GDATDNMQGV) lie on the Extracellular side of the membrane. Residues 502–520 (LESFLGTAVSGAIFCLFAG) form a helical membrane-spanning segment. Position 521 (glutamine 521) is a topological domain, cytoplasmic. The chain crosses the membrane as a discontinuously helical span at residues 522–542 (PLTILSSTGPVLVFERLLFNF). Residues 543-550 (SKDHNFDY) are Extracellular-facing. The chain crosses the membrane as a helical span at residues 551 to 571 (LEFRLWIGLWSAFMCLVLVAT). At 572 to 585 (DASFLVQYFTRFTE) the chain is on the cytoplasmic side. The chain crosses the membrane as a helical span at residues 586–609 (EGFSSLISFIFIYDAFKKMIKLAD). Topologically, residues 610-692 (YYPINSDFKV…GNNCDFVPDI (83 aa)) are extracellular. The helical transmembrane segment at 693 to 710 (TLMSFILFLGTYTSSMAM) threads the bilayer. Topologically, residues 711–725 (KKFKTSRYFPTTARK) are cytoplasmic. A helical transmembrane segment spans residues 726 to 745 (LISDFAIILSILIFCVIDAL). Over 746-779 (VGVDTPKLIVPSEFKPTSPNRGWFVPPFGGNPWW) the chain is Extracellular. The segment at 748-779 (VDTPKLIVPSEFKPTSPNRGWFVPPFGGNPWW) is interaction with CA4. The helical transmembrane segment at 780 to 807 (VCLAAAIPALLVTILIFMDQQITAVIVN) threads the bilayer. Topologically, residues 808–819 (RKEHKLKKGAGY) are cytoplasmic. The helical transmembrane segment at 820–836 (HLDLFWVAILMVVCSFM) threads the bilayer. Position 837 (alanine 837) is a topological domain, extracellular. The discontinuously helical transmembrane segment at 838 to 855 (LPWYVAATVISIAHIDSL) threads the bilayer. Residues 856–877 (KMETETSAPGEQPKFLGVREQR) lie on the Cytoplasmic side of the membrane. Residues 878–894 (VTGTLVFILTGLSVFMA) form a helical membrane-spanning segment. Over 895 to 901 (PILKFIP) the chain is Extracellular. A helical membrane pass occupies residues 902-918 (MPVLYGVFLYMGVASLN). At 919-960 (GVQFMDRLKLLLMPLKHQPDFIYLRHVPLRRVHLFTFLQVLC) the chain is on the cytoplasmic side. Positions 961–986 (LALLWILKSTVAAIIFPVMILALVAV) form an intramembrane region, discontinuously helical. Topologically, residues 987-1079 (RKGMDYLFSQ…STFLERHTSC (93 aa)) are cytoplasmic. The tract at residues 1002–1004 (LDD) is CA2-binding. The segment at 1012 to 1079 (KKKEDEKKKK…STFLERHTSC (68 aa)) is disordered. Phosphoserine is present on residues serine 1026 and serine 1029. A CA2-binding region spans residues 1030 to 1033 (DNDD). 2 positions are modified to phosphoserine: serine 1034 and serine 1044. Residues 1057–1059 (FLS) form a required for basolateral targeting region. The segment covering 1062-1079 (KPLDRERSSTFLERHTSC) has biased composition (basic and acidic residues). A Phosphoserine modification is found at serine 1069.

This sequence belongs to the anion exchanger (TC 2.A.31) family. As to quaternary structure, homodimer. Interacts with CA2/carbonic anhydrase 2 and CA4/carbonic anhydrase 4 which may regulate transporter activity. Isoform 1 but not isoform 2 interacts with AHCYL1 (via PEST domain when phosphorylated); the interaction increases SLC4A4 isoform 1 activity. Interacts with AHCYL2. Phosphorylation of Ser-1026 by PKA increases the binding of CA2 and changes the Na(+):HCO3(-) stoichiometry of the transporter from 3:1 to 2:1. Phosphorylated in presence of STK39 and dephosphorylated in presence of PP1 phosphatase; phosphorylation seems to inhibit SLC4A4 activity. In terms of processing, N-glycosylated. May not be necessary for the transporter basic functions. As to expression, isoform 1 is specifically expressed in pancreatic ducts and acini. Also expressed in parotid acinar cells and in the colonic crypts.

The protein resides in the basolateral cell membrane. It is found in the cell membrane. It catalyses the reaction 2 hydrogencarbonate(out) + Na(+)(out) = 2 hydrogencarbonate(in) + Na(+)(in). The catalysed reaction is 3 hydrogencarbonate(out) + Na(+)(out) = 3 hydrogencarbonate(in) + Na(+)(in). Activated by cyclic AMP. Electrogenic sodium/bicarbonate cotransporter with a Na(+):HCO3(-) stoichiometry varying from 1:2 to 1:3. May regulate bicarbonate influx/efflux at the basolateral membrane of cells and regulate intracellular pH. The sequence is that of Electrogenic sodium bicarbonate cotransporter 1 (Slc4a4) from Mus musculus (Mouse).